The chain runs to 1706 residues: Cadherin-99C (1706 aa).

Residues 1-28 (MAARNSLTPQQGLGFFGLLILLCSAVLG) form the signal peptide. Residues 29–1395 (KSQMCEVETG…AIDNEVFPFT (1367 aa)) lie on the Extracellular side of the membrane. Cadherin domains are found at residues 68-142 (DPDT…APRF), 143-264 (MNTP…DPSF), 277-387 (INPE…PPVI), 388-500 (SSSQ…APKL), 519-604 (VTQV…PPRF), 605-704 (QKPI…NPEF), 707-807 (STLP…VPKF), 808-908 (SDAR…PPRF), 909-1005 (ITVP…RVDV), 1038-1148 (SDDS…APEF), and 1156-1270 (QQDT…ALSF). N-linked (GlcNAc...) asparagine glycosylation is found at Asn105 and Asn188. 4 N-linked (GlcNAc...) asparagine glycosylation sites follow: Asn442, Asn553, Asn620, and Asn753. N-linked (GlcNAc...) asparagine glycans are attached at residues Asn1053, Asn1088, and Asn1108. 2 N-linked (GlcNAc...) asparagine glycosylation sites follow: Asn1311 and Asn1367. Residues 1396 to 1416 (LIAISLVILILGTIGIIYICI) traverse the membrane as a helical segment. Topologically, residues 1417-1706 (SWSKYKNFKQ…RSEVETTTEL (290 aa)) are cytoplasmic.

Interacts (via the cytoplasmic domain) with ck. Interacts (via the cytoplasmic domain) with Cul1 and Ubr3.

The protein resides in the apical cell membrane. Its subcellular location is the endosome membrane. It localises to the cell projection. It is found in the microvillus membrane. Functionally, cadherin that functions in epithelial morphogenesis and the intestine epithelial immune response. Essential for female fertility. Regulates the length and organization of apical microvilli in developing follicle cells and salivary glands. Function in the follicle cell is essential for egg development as the microvilli secrete eggshell material such as the vitelline membrane. Acts at least in part by regulating the recruitment of the myosin ck to the follicle cell microvilli. Also required to regulate cell rearrangements during salivary tube elongation, possibly by modulating cellular adhesion between the apical surface and apical extracellular matrix during epithelial tube elongation. May also function in cellular adhesion during the development of other tubular epithelia such as the trachea. Possibly functions as an apical membrane determinant which acts in apical membrane expansion during salivary and tracheal epithelial tube elongation. In salivary gland development, this function is independent of the other apical membrane determinants crb and sas. Essential downstream component of a hh-signaling pathway which regulates the Duox-dependent gut epithelial immune response to bacterial uracil; required for endosome formation in the enterocyte and activating norpA-dependent Ca2+ mobilization, which are essential steps in the Duox-dependent production of reactive oxygen species (ROS) in response to intestinal bacterial infection. The polypeptide is Cadherin-99C (Drosophila melanogaster (Fruit fly)).